The primary structure comprises 338 residues: MEPGIPPMIDKAPAYSHVLIAGGIGGATADFLMHSLDTVKTRQQAALYTNKYNGMVKCYSTILCEEGVFHGLYSGVCPMLIGSLPATALFFSSYEYTKRHLMSNYNLPETLCFLLAGFVGDLFASVVYVPSEVLKTRLQLQGRYNNPHFQSNYNYPSFRGAVKQIAKQEGMKTFFYGYRATILRDIPFSGFQLLFYEKLRQVAQKECGQKDIGVFRELITGSLAGAGAGFLTTPLDVAKTRLQTMIRTTDKVSDDINSGRYFFAKDENSKSKSAASLVKPKIGIRHVLGGLYKSEGLLGLFRGFGPRIFWTSSQSSLMFVFYEGIIRLFNKNNVLERD.

Helical transmembrane passes span 13-33 (PAYS…DFLM), 71-91 (GLYS…ALFF), 110-130 (TLCF…VYVP), 176-196 (YGYR…LLFY), 218-238 (LITG…LDVA), and 301-321 (FRGF…MFVF). Solcar repeat units lie at residues 13-100 (PAYS…TKRH), 108-202 (PETL…LRQV), and 216-328 (RELI…IIRL).

The protein belongs to the mitochondrial carrier (TC 2.A.29) family.

It is found in the mitochondrion inner membrane. Functionally, mitochondrial solute carriers shuttle metabolites, nucleotides, and cofactors through the mitochondrial inner membrane. This is an uncharacterized protein from Schizosaccharomyces pombe (strain 972 / ATCC 24843) (Fission yeast).